We begin with the raw amino-acid sequence, 289 residues long: Glucosamine-6-phosphate deaminase 1 (289 aa).

Lysine 64 carries the N6-acetyllysine modification. Catalysis depends on aspartate 72, which acts as the Proton acceptor; for enolization step. The For ring-opening step role is filled by aspartate 141. Histidine 143 acts as the Proton acceptor; for ring-opening step in catalysis. The active-site For ring-opening step is glutamate 148. Residue threonine 161 is modified to Phosphothreonine.

Belongs to the glucosamine/galactosamine-6-phosphate isomerase family. Homohexamer.

It is found in the cytoplasm. The catalysed reaction is alpha-D-glucosamine 6-phosphate + H2O = beta-D-fructose 6-phosphate + NH4(+). The protein operates within nucleotide-sugar biosynthesis; UDP-N-acetyl-alpha-D-glucosamine biosynthesis; alpha-D-glucosamine 6-phosphate from D-fructose 6-phosphate: step 1/1. With respect to regulation, allosterically activated by N-acetylglucosamine-6-phosphate (GlcNAc6P). Catalyzes the reversible conversion of alpha-D-glucosamine 6-phosphate (GlcN-6P) into beta-D-fructose 6-phosphate (Fru-6P) and ammonium ion, a regulatory reaction step in de novo uridine diphosphate-N-acetyl-alpha-D-glucosamine (UDP-GlcNAc) biosynthesis via hexosamine pathway. Deamination is coupled to aldo-keto isomerization mediating the metabolic flux from UDP-GlcNAc toward Fru-6P. At high ammonium level can drive amination and isomerization of Fru-6P toward hexosamines and UDP-GlcNAc synthesis. Has a role in fine tuning the metabolic fluctuations of cytosolic UDP-GlcNAc and their effects on hyaluronan synthesis that occur during tissue remodeling. Seems to trigger calcium oscillations in mammalian eggs. These oscillations serve as the essential trigger for egg activation and early development of the embryo. The sequence is that of Glucosamine-6-phosphate deaminase 1 from Pongo abelii (Sumatran orangutan).